Here is a 417-residue protein sequence, read N- to C-terminus: Histidine--tRNA ligase (417 aa).

Belongs to the class-II aminoacyl-tRNA synthetase family.

Its subcellular location is the cytoplasm. It carries out the reaction tRNA(His) + L-histidine + ATP = L-histidyl-tRNA(His) + AMP + diphosphate + H(+). The protein is Histidine--tRNA ligase of Pyrobaculum neutrophilum (strain DSM 2338 / JCM 9278 / NBRC 100436 / V24Sta) (Thermoproteus neutrophilus).